A 435-amino-acid chain; its full sequence is 5-hydroxybenzimidazole synthase (435 aa).

Residues M95, Y124, H163, 186–188, 227–230, and E266 each bind substrate; these read SKG and NGLR. H270 is a Zn(2+) binding site. Y293 provides a ligand contact to substrate. Zn(2+) is bound at residue H334. The [4Fe-4S] cluster site is built by C410, C413, and C417.

Belongs to the ThiC family. 5-hydroxybenzimidazole synthase subfamily. Homodimer. The cofactor is [4Fe-4S] cluster.

The enzyme catalyses 5-amino-1-(5-phospho-beta-D-ribosyl)imidazole + AH2 + S-adenosyl-L-methionine = 5-hydroxybenzimidazole + 5'-deoxyadenosine + formate + L-methionine + A + NH4(+) + phosphate + 2 H(+). Its pathway is cofactor biosynthesis; adenosylcobalamin biosynthesis. Its function is as follows. Catalyzes the complex conversion of aminoimidazole ribotide (AIR) to 5-hydroxybenzimidazole (5-HBI) in a radical S-adenosyl-L-methionine (SAM)-dependent reaction. Is thus involved in the anaerobic biosynthesis of dimethylbenzimidazole (DMB), the lower axial ligand of vitamin B12 (cobalamin). This Desulfuromonas acetoxidans (strain DSM 684 / 11070) protein is 5-hydroxybenzimidazole synthase.